The following is a 347-amino-acid chain: 4-hydroxy-2-oxovalerate aldolase (347 aa).

One can recognise a Pyruvate carboxyltransferase domain in the interval 11–262 (PVVVDTTLRD…NPGLDVFKLL (252 aa)). 19 to 20 (RD) lines the substrate pocket. D20 contacts Mn(2+). Catalysis depends on H23, which acts as the Proton acceptor. Positions 173 and 201 each coordinate substrate. H201 and H203 together coordinate Mn(2+). Y292 is a binding site for substrate.

Belongs to the 4-hydroxy-2-oxovalerate aldolase family. Homodimer. Can also form a heterotetramer composed of two aldolase (TTHB246) and two dehydrogenase (TTHB247) subunits. Upon complex formation, the aldolase shows a 5-fold increase in substrate affinity, while the dehydrogenase shows a 3-fold decrease; the kcat values of each enzyme are reduced by 2-fold when they are in a complex. The cofactor is Co(2+). Ni(2+) serves as cofactor. Requires Mn(2+) as cofactor.

The enzyme catalyses (S)-4-hydroxy-2-oxopentanoate = acetaldehyde + pyruvate. It carries out the reaction (S)-4-hydroxy-2-oxohexanoate = propanal + pyruvate. With respect to regulation, appears to be allosterically activated by NADH. Catalyzes the retro-aldol cleavage of both 4-hydroxy-2-oxopentanoate (HOPA) and 4-hydroxy-2-oxohexanoate (HOHA) to pyruvate and acetaldehyde or propanaldehyde, respectively. The aldehydes produced by this reaction are directly channeled to the dehydrogenase TTHB247, ensuring that these toxic aldehydes are sequestered from cellular components. Is involved in the meta-cleavage pathway for the degradation of aromatic compounds. Appears to be stereospecific since it can cleave (4S)-4-hydroxy-2-oxopentanoate but not the (4R) isomer. Is not able to catalyze the aldol addition of 2-oxobutyrate with acetaldehyde; this indicates that the enzyme is specific for pyruvate as the carbonyl donor. The chain is 4-hydroxy-2-oxovalerate aldolase from Thermus thermophilus (strain ATCC 27634 / DSM 579 / HB8).